We begin with the raw amino-acid sequence, 854 residues long: Envelope glycoprotein B (854 aa).

Residues 1–22 form the signal peptide; the sequence is MAHTGSTVCAFLIFAVLKNVFC. The Virion surface portion of the chain corresponds to 23–732; that stretch reads QTPTSSSEVE…SGIINFIKNP (710 aa). The N-linked (GlcNAc...) asparagine; by host glycan is linked to Asn-51. 5 disulfides stabilise this stretch: Cys-69–Cys-527, Cys-86–Cys-483, Cys-158–Cys-223, Cys-315–Cys-362, and Cys-552–Cys-589. The segment at 125-131 is involved in fusion and/or binding to host membrane; it reads IYNGIYA. Residue Asn-180 is glycosylated (N-linked (GlcNAc...) asparagine; by host). Residues 209–217 are involved in fusion and/or binding to host membrane; sequence GWLLGGYRR. Asn-258 and Asn-311 each carry an N-linked (GlcNAc...) asparagine; by host glycan. Residues Asn-364, Asn-379, Asn-385, Asn-424, Asn-564, and Asn-630 are each glycosylated (N-linked (GlcNAc...) asparagine; by host). The tract at residues 422–443 is disordered; that stretch reads QQNTTTTTTTTRSRRQRRSVSS. Positions 679 to 730 are hydrophobic membrane proximal region; the sequence is LTDLATNRNQFVDAFGSLMDDLGVVGKTVLNAVSSVATLFSSIVSGIINFIK. The chain crosses the membrane as a helical span at residues 733–753; the sequence is FGGMLLFGLIAAVVITVILLN. Residues 754–854 lie on the Intravirion side of the membrane; it reads RKAKRFAQNP…TDSFESTGVP (101 aa). The segment covering 802–813 has biased composition (basic and acidic residues); sequence HASKQPESKQDE. Residues 802–829 form a disordered region; sequence HASKQPESKQDEEQGSTTSGPADWLNKA. An Internalization motif motif is present at residues 839-842; that stretch reads YKPL.

Belongs to the herpesviridae glycoprotein B family. Homotrimer; disulfide-linked. Binds to heparan sulfate proteoglycans. Interacts with gH/gL heterodimer. In terms of processing, a proteolytic cleavage by host furin generates two subunits that remain linked by disulfide bonds.

Its subcellular location is the virion membrane. The protein localises to the host cell membrane. It localises to the host endosome membrane. The protein resides in the host Golgi apparatus membrane. Its function is as follows. Envelope glycoprotein that forms spikes at the surface of virion envelope. Essential for the initial attachment to heparan sulfate moieties of the host cell surface proteoglycans. Involved in fusion of viral and cellular membranes leading to virus entry into the host cell. Following initial binding to its host receptors, membrane fusion is mediated by the fusion machinery composed at least of gB and the heterodimer gH/gL. May be involved in the fusion between the virion envelope and the outer nuclear membrane during virion egress. The polypeptide is Envelope glycoprotein B (Connochaetes taurinus (Blue wildebeest)).